We begin with the raw amino-acid sequence, 176 residues long: Ribosome maturation factor RimM (176 aa).

The PRC barrel domain maps to 97–176; that stretch reads GDEFYWRELV…TIQVDWDPSF (80 aa).

This sequence belongs to the RimM family. In terms of assembly, binds ribosomal protein uS19.

It localises to the cytoplasm. Its function is as follows. An accessory protein needed during the final step in the assembly of 30S ribosomal subunit, possibly for assembly of the head region. Essential for efficient processing of 16S rRNA. May be needed both before and after RbfA during the maturation of 16S rRNA. It has affinity for free ribosomal 30S subunits but not for 70S ribosomes. In Pseudoalteromonas atlantica (strain T6c / ATCC BAA-1087), this protein is Ribosome maturation factor RimM.